Here is a 537-residue protein sequence, read N- to C-terminus: CTP synthase (537 aa).

The interval 1–268 is amidoligase domain; it reads MNTKYIFVTG…DNLVCKKLKL (268 aa). Residue serine 14 coordinates CTP. Serine 14 lines the UTP pocket. 15 to 20 contacts ATP; that stretch reads SLGKGI. Residue tyrosine 55 participates in L-glutamine binding. Aspartate 72 contributes to the ATP binding site. Positions 72 and 142 each coordinate Mg(2+). CTP contacts are provided by residues 149 to 151, 189 to 194, and lysine 225; these read DIE and KTKPTQ. UTP contacts are provided by residues 189–194 and lysine 225; that span reads KTKPTQ. Residues 293–535 form the Glutamine amidotransferase type-1 domain; it reads NIALVGKYVE…IKASLNSKHK (243 aa). Glycine 355 serves as a coordination point for L-glutamine. The Nucleophile; for glutamine hydrolysis role is filled by cysteine 382. Residues 383–386, glutamate 406, and arginine 463 contribute to the L-glutamine site; that span reads LGMQ. Catalysis depends on residues histidine 508 and glutamate 510.

This sequence belongs to the CTP synthase family. As to quaternary structure, homotetramer.

It carries out the reaction UTP + L-glutamine + ATP + H2O = CTP + L-glutamate + ADP + phosphate + 2 H(+). It catalyses the reaction L-glutamine + H2O = L-glutamate + NH4(+). The catalysed reaction is UTP + NH4(+) + ATP = CTP + ADP + phosphate + 2 H(+). The protein operates within pyrimidine metabolism; CTP biosynthesis via de novo pathway; CTP from UDP: step 2/2. Its activity is regulated as follows. Allosterically activated by GTP, when glutamine is the substrate; GTP has no effect on the reaction when ammonia is the substrate. The allosteric effector GTP functions by stabilizing the protein conformation that binds the tetrahedral intermediate(s) formed during glutamine hydrolysis. Inhibited by the product CTP, via allosteric rather than competitive inhibition. Catalyzes the ATP-dependent amination of UTP to CTP with either L-glutamine or ammonia as the source of nitrogen. Regulates intracellular CTP levels through interactions with the four ribonucleotide triphosphates. This Clostridium kluyveri (strain ATCC 8527 / DSM 555 / NBRC 12016 / NCIMB 10680 / K1) protein is CTP synthase.